We begin with the raw amino-acid sequence, 108 residues long: Replication restart protein PriB (108 aa).

In terms of domain architecture, SSB spans 8 to 108 (IDNRFSVMGV…LHAEQIEFID (101 aa)).

Belongs to the PriB family. In terms of assembly, homodimer. Interacts with PriA and DnaT. Component of the replication restart primosome. Primosome assembly occurs via a 'hand-off' mechanism. PriA binds to replication forks, subsequently PriB then DnaT bind; DnaT then displaces ssDNA to generate the helicase loading substrate.

Involved in the restart of stalled replication forks, which reloads the replicative helicase on sites other than the origin of replication; the PriA-PriB pathway is the major replication restart pathway. During primosome assembly it facilitates complex formation between PriA and DnaT on DNA; stabilizes PriA on DNA. Stimulates the DNA unwinding activity of PriA helicase. This Haemophilus influenzae (strain 86-028NP) protein is Replication restart protein PriB.